Consider the following 313-residue polypeptide: Protochlorophyllide reductase (313 aa).

It belongs to the short-chain dehydrogenases/reductases (SDR) family. POR subfamily.

It is found in the plastid. The protein resides in the chloroplast. It carries out the reaction chlorophyllide a + NADP(+) = protochlorophyllide a + NADPH + H(+). Its pathway is porphyrin-containing compound metabolism; chlorophyll biosynthesis. In terms of biological role, phototransformation of protochlorophyllide (Pchlide) to chlorophyllide (Chlide). This chain is Protochlorophyllide reductase, found in Avena sativa (Oat).